A 78-amino-acid chain; its full sequence is U5-ctenitoxin-Pk1a (78 aa).

Cystine bridges form between C6/C23, C13/C29, C20/C52, C22/C40, C31/C38, C58/C73, and C69/C77.

As to expression, expressed by the venom gland.

The protein resides in the secreted. In terms of biological role, lethal neurotoxin. Causes spastic paralysis and death in mice in 4-6 minutes after intracerebroventricular injection at dose levels of 1.5 ug per mouse. The chain is U5-ctenitoxin-Pk1a from Phoneutria keyserlingi (Brazilian wandering spider).